We begin with the raw amino-acid sequence, 386 residues long: Antilisterial bacteriocin subtilosin biosynthesis protein AlbE (386 aa).

In terms of biological role, involved in the production of the bacteriocin subtilosin. This Bacillus subtilis protein is Antilisterial bacteriocin subtilosin biosynthesis protein AlbE (albE).